We begin with the raw amino-acid sequence, 297 residues long: Ubiquinone biosynthesis protein COQ4, mitochondrial (297 aa).

The transit peptide at 1-54 (MLSSARARLPISLCSFSLPFARLPNTLSRYQETWQRLPGRTHPTRSIRTTPAYE) directs the protein to the mitochondrion. Zn(2+) contacts are provided by H178, D179, H182, and E194.

The protein belongs to the COQ4 family. In terms of assembly, component of a multi-subunit COQ enzyme complex, composed of at least COQ3, COQ4, COQ5, COQ6, COQ7 and COQ9. Zn(2+) is required as a cofactor.

It is found in the mitochondrion inner membrane. It catalyses the reaction a 4-hydroxy-3-methoxy-5-(all-trans-polyprenyl)benzoate + H(+) = a 2-methoxy-6-(all-trans-polyprenyl)phenol + CO2. It participates in cofactor biosynthesis; ubiquinone biosynthesis. In terms of biological role, lyase that catalyzes the C1-decarboxylation of 4-hydroxy-3-methoxy-5-(all-trans-polyprenyl)benzoic acid into 2-methoxy-6-(all-trans-polyprenyl)phenol during ubiquinone biosynthesis. The protein is Ubiquinone biosynthesis protein COQ4, mitochondrial of Laccaria bicolor (strain S238N-H82 / ATCC MYA-4686) (Bicoloured deceiver).